The primary structure comprises 196 residues: Probable malonic semialdehyde reductase RutE (196 aa).

This sequence belongs to the nitroreductase family. HadB/RutE subfamily. FMN is required as a cofactor.

The enzyme catalyses 3-hydroxypropanoate + NADP(+) = 3-oxopropanoate + NADPH + H(+). May reduce toxic product malonic semialdehyde to 3-hydroxypropionic acid, which is excreted. The protein is Probable malonic semialdehyde reductase RutE of Escherichia coli O81 (strain ED1a).